A 329-amino-acid polypeptide reads, in one-letter code: Olfactory receptor 10J3 (329 aa).

Residues 1–26 (MPKLNSTFVTEFLFEGFSSFRRQHKL) lie on the Extracellular side of the membrane. Residue Asn-5 is glycosylated (N-linked (GlcNAc...) asparagine). Residues 27-47 (VFFVVFLTLYLLTLSGNVIIM) traverse the membrane as a helical segment. The Cytoplasmic segment spans residues 48–55 (TIIRLDHH). The helical transmembrane segment at 56 to 76 (LHTPMYFFLCMLSISETCYTV) threads the bilayer. Residues 77-100 (AIIPHMLSGLLNPHQPIATQSCAT) are Extracellular-facing. Cys-98 and Cys-190 are disulfide-bonded. The helical transmembrane segment at 101 to 121 (QLFFYLTFGINNCFLLTVMGY) threads the bilayer. Topologically, residues 122-140 (DRYVAICNPLRYSVIMGKR) are cytoplasmic. The helical transmembrane segment at 141 to 161 (ACIQLASGSLGIGLGMAIVQV) threads the bilayer. The Extracellular portion of the chain corresponds to 162–198 (TSVFGLPFCDAFVISHFFCDVRHLLKLACTDTTVNEI). The helical transmembrane segment at 199–218 (INFVVSVCVLVLPMGLVFIS) threads the bilayer. At 219 to 238 (YVLIISTILKIASAEGQKKA) the chain is on the cytoplasmic side. Residues 239-259 (FATCASHLTVVIIHYGCASII) traverse the membrane as a helical segment. The Extracellular segment spans residues 260–272 (YLKPKSQSSLGQD). The chain crosses the membrane as a helical span at residues 273–293 (RLISVTYTHHSPTEPCCVQPE). At 294-329 (EQGGQRCSAQSRGAKNSVSLMKRGCEGFSFAFINMY) the chain is on the cytoplasmic side.

The protein belongs to the G-protein coupled receptor 1 family.

It localises to the cell membrane. In terms of biological role, odorant receptor. The protein is Olfactory receptor 10J3 (OR10J3) of Homo sapiens (Human).